Here is a 68-residue protein sequence, read N- to C-terminus: Large ribosomal subunit protein uL29 (68 aa).

The protein belongs to the universal ribosomal protein uL29 family.

The chain is Large ribosomal subunit protein uL29 from Persephonella marina (strain DSM 14350 / EX-H1).